The following is a 368-amino-acid chain: 3-dehydroquinate synthase (368 aa).

NAD(+) is bound by residues aspartate 71–lysine 76, glycine 105–aspartate 109, threonine 129–threonine 130, lysine 142, lysine 151, and threonine 169–threonine 172. Residues glutamate 184, histidine 247, and histidine 264 each contribute to the Zn(2+) site.

It belongs to the sugar phosphate cyclases superfamily. Dehydroquinate synthase family. Co(2+) serves as cofactor. The cofactor is Zn(2+). NAD(+) is required as a cofactor.

The protein localises to the cytoplasm. It catalyses the reaction 7-phospho-2-dehydro-3-deoxy-D-arabino-heptonate = 3-dehydroquinate + phosphate. Its pathway is metabolic intermediate biosynthesis; chorismate biosynthesis; chorismate from D-erythrose 4-phosphate and phosphoenolpyruvate: step 2/7. Catalyzes the conversion of 3-deoxy-D-arabino-heptulosonate 7-phosphate (DAHP) to dehydroquinate (DHQ). This is 3-dehydroquinate synthase from Cupriavidus necator (strain ATCC 17699 / DSM 428 / KCTC 22496 / NCIMB 10442 / H16 / Stanier 337) (Ralstonia eutropha).